Here is a 360-residue protein sequence, read N- to C-terminus: Pyrimidine monooxygenase RutA (360 aa).

FMN-binding positions include isoleucine 49–lysine 50, asparagine 115, glutamate 124, arginine 140–tyrosine 141, and serine 190.

This sequence belongs to the NtaA/SnaA/DszA monooxygenase family. RutA subfamily.

It catalyses the reaction uracil + FMNH2 + NADH + O2 = (Z)-3-ureidoacrylate + FMN + NAD(+) + H2O + H(+). It carries out the reaction thymine + FMNH2 + NADH + O2 = (Z)-2-methylureidoacrylate + FMN + NAD(+) + H2O + H(+). Catalyzes the pyrimidine ring opening between N-3 and C-4 by an unusual flavin hydroperoxide-catalyzed mechanism, adding oxygen atoms in the process to yield ureidoacrylate peracid, that immediately reacts with FMN forming ureidoacrylate and FMN-N(5)-oxide. The FMN-N(5)-oxide reacts spontaneously with NADH to produce FMN. Requires the flavin reductase RutF to regenerate FMN in vivo. The polypeptide is Pyrimidine monooxygenase RutA (Stutzerimonas stutzeri (strain A1501) (Pseudomonas stutzeri)).